The chain runs to 156 residues: Transcriptional repressor NrdR (156 aa).

The segment at 3-34 (CPFCQHGHSRVIDSRVIEAGSAIRRRRECSQC) is a zinc-finger region. Positions 46 to 136 (LLVLKRNGVT…VYKSFESADD (91 aa)) constitute an ATP-cone domain.

The protein belongs to the NrdR family. The cofactor is Zn(2+).

In terms of biological role, negatively regulates transcription of bacterial ribonucleotide reductase nrd genes and operons by binding to NrdR-boxes. This is Transcriptional repressor NrdR from Corynebacterium efficiens (strain DSM 44549 / YS-314 / AJ 12310 / JCM 11189 / NBRC 100395).